The chain runs to 479 residues: Polyadenylate-binding protein-interacting protein 1 (479 aa).

The tract at residues 1–114 (MSDGFDRAPG…PQQNSESAMA (114 aa)) is disordered. Ser2 is modified (N-acetylalanine). Over residues 11-33 (AGRGRSRGLGRGGGGPEGGGFPN) the composition is skewed to gly residues. An Omega-N-methylarginine modification is found at Arg21. Pro residues predominate over residues 45-69 (PPQPKAPGFLQPPPLRQPRTTPPPG). Residues 98–111 (PSSQDKIPQQNSES) show a composition bias toward polar residues. Residues 116 to 143 (PQVVVAPVLMSKLSVNAPEFYPSGYSSS) are PABPC1-interacting motif-2 (PAM2). The segment at 157–375 (TLSEYVQDFL…LLKLVELRSS (219 aa)) is PAIP1 middle domain (PAIP1M). The MIF4G domain maps to 159 to 376 (SEYVQDFLNH…LKLVELRSSN (218 aa)). The disordered stretch occupies residues 435-455 (DYEENGTDLSGAGDPYLDDID). The tract at residues 440 to 479 (GTDLSGAGDPYLDDIDDEMDPEIEEAYEKFCLESERKRKQ) is PABPC1-interacting motif-1 (PAM1).

In terms of assembly, interacts with the RRM1-RRM2 and C-terminus regions of PABPC1 in a 1:1 stoichiometry. Interacts with EIF4A. As to quaternary structure, (Microbial infection) Interacts (via PAIP1M) with human SARS coronaviruses SARS-COV and SARS-COV-2 NSP3 protein (via SARS-unique domain); the interaction increases binding affinity with PABPC1.

The protein localises to the cytoplasm. In terms of biological role, acts as a coactivator in the regulation of translation initiation of poly(A)-containing mRNAs. Its stimulatory activity on translation is mediated via its action on PABPC1. Competes with PAIP2 for binding to PABPC1. Its association with EIF4A and PABPC1 may potentiate contacts between mRNA termini. May also be involved in translationally coupled mRNA turnover. Implicated with other RNA-binding proteins in the cytoplasmic deadenylation/translational and decay interplay of the FOS mRNA mediated by the major coding-region determinant of instability (mCRD) domain. (Microbial infection) Upon interaction with SARS coronavirus SARS-CoV NSP3 protein, plays an important role in viral protein synthesis. In Homo sapiens (Human), this protein is Polyadenylate-binding protein-interacting protein 1.